Here is a 165-residue protein sequence, read N- to C-terminus: RNA pyrophosphohydrolase (165 aa).

Positions Gly6–Thr149 constitute a Nudix hydrolase domain. A Nudix box motif is present at residues Gly38–Gly59.

This sequence belongs to the Nudix hydrolase family. RppH subfamily. A divalent metal cation serves as cofactor.

Accelerates the degradation of transcripts by removing pyrophosphate from the 5'-end of triphosphorylated RNA, leading to a more labile monophosphorylated state that can stimulate subsequent ribonuclease cleavage. The chain is RNA pyrophosphohydrolase from Hydrogenovibrio crunogenus (strain DSM 25203 / XCL-2) (Thiomicrospira crunogena).